Here is a 635-residue protein sequence, read N- to C-terminus: Sodium- and chloride-dependent creatine transporter 1 (635 aa).

Residues 1–27 (MAKKSAENGIYSVSGDEKKGPLIVSGP) form a disordered region. The Cytoplasmic segment spans residues 1-60 (MAKKSAENGIYSVSGDEKKGPLIVSGPDGAPAKGDGPAGLGAPGGRLAVPPRETWTRQMD). A helical transmembrane segment spans residues 61–81 (FIMSCVGFAVGLGNVWRFPYL). Residues 82–87 (CYKNGG) are Extracellular-facing. A helical transmembrane segment spans residues 88–108 (GVFLIPYVLIALVGGIPIFFL). The Cytoplasmic portion of the chain corresponds to 109–138 (EISLGQFMKAGSINVWNICPLFKGLGYASM). The helical transmembrane segment at 139 to 159 (VIVFYCNTYYIMVLAWGFYYL) threads the bilayer. Residues 160–230 (VKSFTTTLPW…LSTGLEVPGA (71 aa)) are Extracellular-facing. N-linked (GlcNAc...) asparagine glycans are attached at residues N192 and N197. The helical transmembrane segment at 231-251 (LNWEVTLCLLACWVLVYFCVW) threads the bilayer. Topologically, residues 252–269 (KGVKSTGKIVYFTATFPY) are cytoplasmic. The chain crosses the membrane as a helical span at residues 270–290 (VVLVVLLVRGVLLPGALDGII). Over 291–304 (YYLKPDWSKLGSPQ) the chain is Extracellular. A helical transmembrane segment spans residues 305-325 (VWIDAGTQIFFSYAIGLGALT). Residues 326-341 (ALGSYNRFNNNCYKDA) are Cytoplasmic-facing. Residues 342 to 362 (IILALINSGTSFFAGFVVFSI) form a helical membrane-spanning segment. The Extracellular segment spans residues 363–394 (LGFMATEQGVHISKVAESGPGLAFIAYPRAVT). The helical transmembrane segment at 395–415 (LMPVAPLWAALFFFMLLLLGL) threads the bilayer. Topologically, residues 416–444 (DSQFVGVEGFITGLLDLLPASYYFRFQRE) are cytoplasmic. A helical membrane pass occupies residues 445–465 (ISVALCCALCFVIDLSMVTDG). The Extracellular segment spans residues 466–479 (GMYVFQLFDYYSAS). Residues 480 to 500 (GTTLLWQAFWECVVVAWVYGA) traverse the membrane as a helical segment. The Cytoplasmic portion of the chain corresponds to 501–520 (DRFMDDIACMIGYRPCPWMK). Residues 521–541 (WCWSFFTPLVCMGIFIFNIVY) traverse the membrane as a helical segment. Residues 542-560 (YEPLVYNNTYVYPWWGEAM) lie on the Extracellular side of the membrane. Residue N548 is glycosylated (N-linked (GlcNAc...) asparagine). The helical transmembrane segment at 561–581 (GWAFALSSMLCVPLHLLGCLL) threads the bilayer. Residues 582-635 (RAKGTMAERWQHLTQPIWGLHHLEYRAQDADVRGLTTLTPVSESSKVVVVESVM) are Cytoplasmic-facing. 2 positions are modified to phosphothreonine: T617 and T620. S623 carries the post-translational modification Phosphoserine.

The protein belongs to the sodium:neurotransmitter symporter (SNF) (TC 2.A.22) family. SLC6A8 subfamily. Glycosylated. As to expression, brain. Highly expressed in brain capillaries branching in all cortical layers and moderately expressed in neuronal perikarya (at protein level).

The protein resides in the cell membrane. The protein localises to the apical cell membrane. The catalysed reaction is creatine(out) + chloride(out) + 2 Na(+)(out) = creatine(in) + chloride(in) + 2 Na(+)(in). Creatine:sodium symporter which mediates the uptake of creatine. Plays an important role in supplying creatine to the brain via the blood-brain barrier. The sequence is that of Sodium- and chloride-dependent creatine transporter 1 (Slc6a8) from Mus musculus (Mouse).